A 68-amino-acid polypeptide reads, in one-letter code: Protein P33 (68 aa).

Positions 34 to 63 form a coiled coil; the sequence is IVNLQGRIAELEARETEMLARVDTLIARLA.

In terms of biological role, assembly protein. This Acinetobacter calcoaceticus (Arthrobacter siderocapsulatus) protein is Protein P33 (XXXIII).